The sequence spans 500 residues: Serine/threonine-protein phosphatase 2A 56 kDa regulatory subunit beta isoform (500 aa).

The segment covering 1 to 19 (METKLPPASTPTSPSSPGL) has biased composition (low complexity). Disordered stretches follow at residues 1 to 55 (METK…YQSN) and 474 to 500 (GTQG…GGQS). Phosphoserine; by CLK2 occurs at positions 32, 35, 44, 46, 47, and 48. Positions 34 to 45 (RSLRRARPRRSH) are enriched in basic residues.

The protein belongs to the phosphatase 2A regulatory subunit B56 family. In terms of assembly, component of the serine/threonine-protein phosphatase 2A complex (PP2A). This complex consists of a common heterodimeric core enzyme, composed of a 36 kDa catalytic subunit (subunit C) and a 65 kDa constant scaffold subunit (PR65 or subunit A), that associates with a variety of regulatory subunits. Proteins that associate with the core dimer include three families of regulatory subunits B (the R2/B/PR55/B55, R3/B''/PR72/PR130/PR59 and R5/B'/B56 families), the 48 kDa variable regulatory subunit, viral proteins, and cell signaling molecules. Interacts with SGO1. Interacts with AKT1. As to expression, highly expressed in brain.

The protein localises to the nucleus. Its function is as follows. As the regulatory component of the serine/threonine-protein phosphatase 2A (PP2A) holoenzyme, modulates substrate specificity, subcellular localization, and responsiveness to phosphorylation. The phosphorylated form mediates the interaction between PP2A and AKT1, leading to AKT1 dephosphorylation. The sequence is that of Serine/threonine-protein phosphatase 2A 56 kDa regulatory subunit beta isoform (PPP2R5B) from Oryctolagus cuniculus (Rabbit).